Here is a 331-residue protein sequence, read N- to C-terminus: MKIAIDAMGGDFAPENIVKGVNLAKKELSDVTFQLYGDGAKIRQFLDDETAIEIIETTEVIDFHDDPVAAIKSKKDSSLVRAVTAVKKREADAVLSAGSTGALLTAGLMLVKRIKQVSRPALMSTLPTADGRGFDMLDLGANTENTAHHLVDFAILGSYYAENVRGIEKPRVALISNGSEESKGSPTVKEAHEILSAMTEINFIGNIESRDLLSGGADVVVTDGFTGNAILKAIEGTATVLMKEIKSAIMAGSVTTKIGGVLIKKPLSGLKDLMSTDGAGGAAFVGLKAPVVKAHGNSSELAIASALKQIHKMLESDVSGKLVKHFENMDK.

This sequence belongs to the PlsX family. Homodimer. Probably interacts with PlsY.

It localises to the cytoplasm. The enzyme catalyses a fatty acyl-[ACP] + phosphate = an acyl phosphate + holo-[ACP]. The protein operates within lipid metabolism; phospholipid metabolism. In terms of biological role, catalyzes the reversible formation of acyl-phosphate (acyl-PO(4)) from acyl-[acyl-carrier-protein] (acyl-ACP). This enzyme utilizes acyl-ACP as fatty acyl donor, but not acyl-CoA. This chain is Phosphate acyltransferase, found in Lactococcus lactis subsp. cremoris (strain SK11).